The sequence spans 798 residues: Transferrin receptor protein 2 (798 aa).

Over 1–81 the chain is Cytoplasmic; sequence MEQRWGLLRK…WAAAGRKAAP (81 aa). The Endocytosis signal motif lies at 23–26; it reads YRRV. The segment at 25–44 is disordered; it reads RVEGPQLENLEEEDREEGEE. Acidic residues predominate over residues 33–44; the sequence is NLEEEDREEGEE. Residues 82-102 form a helical; Signal-anchor for type II membrane protein membrane-spanning segment; it reads YLVLTTLLIFTGAFLLGYVAF. At 103 to 798 the chain is on the extracellular side; sequence RGSCQACGDS…GDVWNIDNNF (696 aa). Residues N235, N334, and N535 are each glycosylated (N-linked (GlcNAc...) asparagine).

It belongs to the peptidase M28 family. M28B subfamily. In terms of assembly, homodimer.

The protein localises to the cell membrane. In terms of biological role, mediates cellular uptake of transferrin-bound iron in a non-iron dependent manner. May be involved in iron metabolism, hepatocyte function and erythrocyte differentiation. In Rattus norvegicus (Rat), this protein is Transferrin receptor protein 2 (Tfr2).